Reading from the N-terminus, the 143-residue chain is Probable glycine cleavage system H protein (143 aa).

The region spanning 36 to 118 (VATVGITDFA…YGEGWIFKIK (83 aa)) is the Lipoyl-binding domain. Residue Lys-77 is modified to N6-lipoyllysine.

The protein belongs to the GcvH family. In terms of assembly, the glycine cleavage system is composed of four proteins: P, T, L and H. The cofactor is (R)-lipoate.

Its function is as follows. The glycine cleavage system catalyzes the degradation of glycine. The H protein shuttles the methylamine group of glycine from the P protein to the T protein. The polypeptide is Probable glycine cleavage system H protein (Aeropyrum pernix (strain ATCC 700893 / DSM 11879 / JCM 9820 / NBRC 100138 / K1)).